The primary structure comprises 38 residues: uncharacterized protein (38 aa).

This is an uncharacterized protein from Acidianus two-tailed virus (ATV).